The chain runs to 320 residues: Rhomboid-like protein 17, chloroplastic (320 aa).

The transit peptide at M1–R87 directs the protein to the chloroplast. A run of 5 helical transmembrane segments spans residues W116–T136, L160–I180, L199–A219, M247–L267, and I295–I315.

The protein belongs to the peptidase S54 family.

Its subcellular location is the plastid. The protein resides in the chloroplast membrane. Probable rhomboid-type serine protease that catalyzes intramembrane proteolysis. This is Rhomboid-like protein 17, chloroplastic from Arabidopsis thaliana (Mouse-ear cress).